The primary structure comprises 459 residues: Glycosyl hydrolase family 109 protein (459 aa).

Residues 1–31 constitute a signal peptide (tat-type signal); the sequence is MHNIHRRNFLKAAGAATAGLVTANIALSAYA. NAD(+)-binding positions include 64 to 65, Asp86, 135 to 138, 155 to 156, and Asn184; these read ER, WEWH, and EV. Substrate contacts are provided by residues Tyr213, Arg232, 244–247, and Tyr326; that span reads YPTH. An NAD(+)-binding site is contributed by Tyr244.

This sequence belongs to the Gfo/Idh/MocA family. Glycosyl hydrolase 109 subfamily. NAD(+) serves as cofactor. Predicted to be exported by the Tat system. The position of the signal peptide cleavage has not been experimentally proven.

Glycosidase. This is Glycosyl hydrolase family 109 protein from Shewanella baltica (strain OS185).